We begin with the raw amino-acid sequence, 142 residues long: Large ribosomal subunit protein uL13 (142 aa).

It belongs to the universal ribosomal protein uL13 family. As to quaternary structure, part of the 50S ribosomal subunit.

Its function is as follows. This protein is one of the early assembly proteins of the 50S ribosomal subunit, although it is not seen to bind rRNA by itself. It is important during the early stages of 50S assembly. In Pseudomonas entomophila (strain L48), this protein is Large ribosomal subunit protein uL13.